A 388-amino-acid chain; its full sequence is Protein TsgA homolog (388 aa).

12 helical membrane-spanning segments follow: residues 11-31 (WISF…GMIM), 50-70 (TFLN…IEII), 77-97 (IFSF…NSIF), 101-121 (INMF…TFII), 133-153 (LLLL…IVTA), 160-180 (IIWY…FLLT), 206-226 (VFLL…FISW), 244-264 (SLVS…SFII), 268-288 (NLYR…YCFI), 298-318 (YIII…ITLA), 332-352 (LILL…SPIV), and 360-380 (TLIS…LIYF).

Belongs to the major facilitator superfamily. TsgA family.

The protein resides in the cell membrane. The polypeptide is Protein TsgA homolog (Buchnera aphidicola subsp. Acyrthosiphon pisum (strain 5A)).